A 479-amino-acid polypeptide reads, in one-letter code: MKLEKKKGIGAKRRGKKSSIDHDPFLEEETEKRRKFNYDDDDDIESVESEEEGKVGEEVEDEFAHETVGEKRKRLAEDTLNRIEEAKQREHEEDNEEDDDFRDSLVAKTLMQEQLEKSGRVRRANALRVQDLQSSDKFRVIVKHQHSVTGVALSDDDSRGFSVSKDGTILHWDVSSGKSDEYKWPSDEVLKSHGLKFQESWYTRHNKQSLALAVSSDGRYLATGGVDCHVHLWDIRTREHVQAFTGHCGIVSSLCFREGTAELFSGSYDGTLSIWNAEHRTYIESCFGHQSELLSIDALGRERVLSVGRDRTMQLYKVPESTRLIYRASESNFECCCFVNSDEFLSGSDNGSIALWSILKKKPVFIVNNAHHVIADHDSVNHNCTPACSWVSSVAVCRGSELAASGAGNGCVRLWGVESGSSAIQPLYELPLPGFVNSLAFAKSGRFLIAGVGQEPRLGRWGCLKSAQNGVAIHPLRLS.

The segment at 1–73 is disordered; sequence MKLEKKKGIG…AHETVGEKRK (73 aa). A compositionally biased stretch (basic residues) spans 8–17; it reads GIGAKRRGKK. Over residues 18-38 the composition is skewed to basic and acidic residues; that stretch reads SSIDHDPFLEEETEKRRKFNY. Residues 39–51 are compositionally biased toward acidic residues; the sequence is DDDDDIESVESEE. Residues 52 to 73 are compositionally biased toward basic and acidic residues; the sequence is EGKVGEEVEDEFAHETVGEKRK. WD repeat units lie at residues 143 to 182, 204 to 243, 246 to 285, 288 to 326, 328 to 366, 386 to 425, and 431 to 471; these read KHQH…SDEY, RHNK…HVQA, GHCG…YIES, GHQS…RLIY, ASES…PVFI, PACS…SAIQ, and PLPG…QNGV.

The protein belongs to the WD repeat RRP9 family.

Its subcellular location is the nucleus. The protein localises to the nucleolus. Functionally, component of a nucleolar small nuclear ribonucleoprotein particle (snoRNP) thought to participate in the processing and modification of pre-ribosomal RNA. Essential for embryogenesis. May function during late embryogenesis. The chain is U3 snoRNP-associated protein-like EMB2271 from Arabidopsis thaliana (Mouse-ear cress).